A 599-amino-acid chain; its full sequence is Laccase-2 (599 aa).

The signal sequence occupies residues 1–19 (MARSTTSLFALSLVASAFA). 2 Plastocyanin-like domains span residues 21-145 (VVDY…IVIY) and 157-307 (VDDE…LVYE). Cu cation is bound by residues His82, His84, His127, and His129. Residues Cys103 and Cys588 are joined by a disulfide bond. Asn207, Asn208, Asn231, Asn397, and Asn443 each carry an N-linked (GlcNAc...) asparagine glycan. The region spanning 450-567 (DVPTLLKILT…EGFAMVFAEA (118 aa)) is the Plastocyanin-like 3 domain. His497, His500, His502, His549, Cys550, His551, and His555 together coordinate Cu cation.

The protein belongs to the multicopper oxidase family. In terms of assembly, homodimer. It depends on Cu cation as a cofactor. In terms of tissue distribution, in mycelia, at a lower level than LCC4.

Its subcellular location is the secreted. The catalysed reaction is 4 hydroquinone + O2 = 4 benzosemiquinone + 2 H2O. Its function is as follows. Lignin degradation and detoxification of lignin-derived products. The chain is Laccase-2 (LCC2) from Thanatephorus cucumeris (Black scurf of potato).